The following is a 218-amino-acid chain: Ribose-5-phosphate isomerase A (218 aa).

Substrate is bound by residues 28 to 31, 81 to 84, and 94 to 97; these read TGST, DGAD, and KGGG. Catalysis depends on Glu-103, which acts as the Proton acceptor. Residue Lys-121 participates in substrate binding.

This sequence belongs to the ribose 5-phosphate isomerase family. As to quaternary structure, homodimer.

It carries out the reaction aldehydo-D-ribose 5-phosphate = D-ribulose 5-phosphate. It participates in carbohydrate degradation; pentose phosphate pathway; D-ribose 5-phosphate from D-ribulose 5-phosphate (non-oxidative stage): step 1/1. Functionally, catalyzes the reversible conversion of ribose-5-phosphate to ribulose 5-phosphate. This Aliivibrio salmonicida (strain LFI1238) (Vibrio salmonicida (strain LFI1238)) protein is Ribose-5-phosphate isomerase A.